We begin with the raw amino-acid sequence, 520 residues long: Glucose starvation modulator protein 1 (520 aa).

A DNA-binding region (zn(2)-C6 fungal-type) is located at residues 20–48; the sequence is CVFCHEKHLQCSNERPCKNCVKRGLAHEC. In terms of domain architecture, PAS spans 376 to 445; the sequence is DYEKLSQLNS…FRLFKTVAVG (70 aa).

This sequence belongs to the ERT1/acuK family.

It is found in the nucleus. Its function is as follows. Transcription factor which regulates nonfermentable carbon utilization. The polypeptide is Glucose starvation modulator protein 1 (GSM1) (Scheffersomyces stipitis (strain ATCC 58785 / CBS 6054 / NBRC 10063 / NRRL Y-11545) (Yeast)).